The chain runs to 63 residues: Large ribosomal subunit protein bL32c (63 aa).

Residues 38 to 63 are disordered; sequence RSFSGVSEHPKPKGFSRQQTNNRVLG. Positions 53 to 63 are enriched in polar residues; sequence SRQQTNNRVLG.

This sequence belongs to the bacterial ribosomal protein bL32 family.

It localises to the plastid. The protein resides in the chloroplast. The polypeptide is Large ribosomal subunit protein bL32c (rpl32) (Oryza sativa (Rice)).